The chain runs to 692 residues: Threonine--tRNA ligase (692 aa).

Positions 1 to 20 (MSAPAQPAPGVDGGDPSQAR) are disordered. The 74-residue stretch at 1-74 (MSAPAQPAPG…DVDTDITPVA (74 aa)) folds into the TGS domain. The catalytic stretch occupies residues 269 to 575 (DHRKLGVELD…LTEHYAGAFP (307 aa)). 3 residues coordinate Zn(2+): C374, H425, and H552.

The protein belongs to the class-II aminoacyl-tRNA synthetase family. As to quaternary structure, homodimer. It depends on Zn(2+) as a cofactor.

Its subcellular location is the cytoplasm. It catalyses the reaction tRNA(Thr) + L-threonine + ATP = L-threonyl-tRNA(Thr) + AMP + diphosphate + H(+). Functionally, catalyzes the attachment of threonine to tRNA(Thr) in a two-step reaction: L-threonine is first activated by ATP to form Thr-AMP and then transferred to the acceptor end of tRNA(Thr). Also edits incorrectly charged L-seryl-tRNA(Thr). This Mycobacterium tuberculosis (strain CDC 1551 / Oshkosh) protein is Threonine--tRNA ligase.